The sequence spans 379 residues: Citrate utilization protein B (379 aa).

Residues cysteine 28, cysteine 31, cysteine 34, cysteine 38, cysteine 62, cysteine 65, cysteine 68, and cysteine 72 each contribute to the [4Fe-4S] cluster site.

This chain is Citrate utilization protein B (citB), found in Escherichia coli.